The sequence spans 232 residues: uncharacterized protein (232 aa).

5 consecutive transmembrane segments (helical) span residues 4 to 24, 42 to 62, 100 to 120, 145 to 165, and 171 to 191; these read LLGVFFVPIIPFSFVVDYVFE, VLVGALGVGKAGTLLILLAVL, LFFISAFAIPLTVIHFLILHM, LAFVALVSSLVIAPAYAFFTL, and GNLILTPILLIEWLVWLWVGF.

Its subcellular location is the cell membrane. This is an uncharacterized protein from Aquifex aeolicus (strain VF5).